The sequence spans 126 residues: Large ribosomal subunit protein bL12 (126 aa).

This sequence belongs to the bacterial ribosomal protein bL12 family. Homodimer. Part of the ribosomal stalk of the 50S ribosomal subunit. Forms a multimeric L10(L12)X complex, where L10 forms an elongated spine to which 2 to 4 L12 dimers bind in a sequential fashion. Binds GTP-bound translation factors.

Forms part of the ribosomal stalk which helps the ribosome interact with GTP-bound translation factors. Is thus essential for accurate translation. In Chlorobium phaeobacteroides (strain BS1), this protein is Large ribosomal subunit protein bL12.